Reading from the N-terminus, the 441-residue chain is ATP-dependent protease ATPase subunit HslU (441 aa).

ATP is bound by residues valine 18, glycine 60–glutamate 65, aspartate 253, glutamate 319, and arginine 391.

Belongs to the ClpX chaperone family. HslU subfamily. In terms of assembly, a double ring-shaped homohexamer of HslV is capped on each side by a ring-shaped HslU homohexamer. The assembly of the HslU/HslV complex is dependent on binding of ATP.

The protein resides in the cytoplasm. In terms of biological role, ATPase subunit of a proteasome-like degradation complex; this subunit has chaperone activity. The binding of ATP and its subsequent hydrolysis by HslU are essential for unfolding of protein substrates subsequently hydrolyzed by HslV. HslU recognizes the N-terminal part of its protein substrates and unfolds these before they are guided to HslV for hydrolysis. The polypeptide is ATP-dependent protease ATPase subunit HslU (Nitratidesulfovibrio vulgaris (strain DP4) (Desulfovibrio vulgaris)).